A 201-amino-acid polypeptide reads, in one-letter code: Recombination protein RecR (201 aa).

The C4-type zinc-finger motif lies at 60-75; the sequence is CSCCGNVDTSDPCTIC. One can recognise a Toprim domain in the interval 83-178; the sequence is ATLIVVEDVS…RVTRLAHGVP (96 aa).

The protein belongs to the RecR family.

Functionally, may play a role in DNA repair. It seems to be involved in an RecBC-independent recombinational process of DNA repair. It may act with RecF and RecO. The polypeptide is Recombination protein RecR (Brucella ovis (strain ATCC 25840 / 63/290 / NCTC 10512)).